Here is a 221-residue protein sequence, read N- to C-terminus: Deoxyribose-phosphate aldolase (221 aa).

The Proton donor/acceptor role is filled by Asp-90. Lys-152 (schiff-base intermediate with acetaldehyde) is an active-site residue. The active-site Proton donor/acceptor is Lys-181.

The protein belongs to the DeoC/FbaB aldolase family. DeoC type 1 subfamily.

It localises to the cytoplasm. The catalysed reaction is 2-deoxy-D-ribose 5-phosphate = D-glyceraldehyde 3-phosphate + acetaldehyde. Its pathway is carbohydrate degradation; 2-deoxy-D-ribose 1-phosphate degradation; D-glyceraldehyde 3-phosphate and acetaldehyde from 2-deoxy-alpha-D-ribose 1-phosphate: step 2/2. Functionally, catalyzes a reversible aldol reaction between acetaldehyde and D-glyceraldehyde 3-phosphate to generate 2-deoxy-D-ribose 5-phosphate. This Exiguobacterium sp. (strain ATCC BAA-1283 / AT1b) protein is Deoxyribose-phosphate aldolase.